A 691-amino-acid chain; its full sequence is Elongation factor G (691 aa).

The tr-type G domain occupies lysine 8 to aspartate 283. Residues alanine 17–threonine 24, aspartate 81–histidine 85, and asparagine 135–aspartate 138 contribute to the GTP site.

This sequence belongs to the TRAFAC class translation factor GTPase superfamily. Classic translation factor GTPase family. EF-G/EF-2 subfamily.

The protein resides in the cytoplasm. Its function is as follows. Catalyzes the GTP-dependent ribosomal translocation step during translation elongation. During this step, the ribosome changes from the pre-translocational (PRE) to the post-translocational (POST) state as the newly formed A-site-bound peptidyl-tRNA and P-site-bound deacylated tRNA move to the P and E sites, respectively. Catalyzes the coordinated movement of the two tRNA molecules, the mRNA and conformational changes in the ribosome. This Campylobacter jejuni subsp. jejuni serotype O:6 (strain 81116 / NCTC 11828) protein is Elongation factor G.